Here is a 398-residue protein sequence, read N- to C-terminus: Cholinephosphotransferase 1 (398 aa).

Ala2 carries the N-acetylalanine modification. Over 2-62 (AAGAGARPAP…LLQWIPLWMA (61 aa)) the chain is Cytoplasmic. A helical membrane pass occupies residues 63 to 83 (PNTITLIGLAINLVTTLVLIF). Asn64 is a CDP-choline binding site. The Lumenal segment spans residues 84-93 (YCPTVTEEAP). Residues 94–118 (YWTYLLCALGLFIYQSLDAIDGKQA) form a helical membrane-spanning segment. Residues Asp111 and Asp114 each contribute to the Mg(2+) site. Arg119 is a binding site for CDP-choline. The Cytoplasmic segment spans residues 119–125 (RRTNSCS). Residues 126-150 (PLGELFDHGCDSLSTVFMAIGASIA) traverse the membrane as a helical segment. Asp132 is a binding site for Mg(2+). His133 (proton acceptor) is an active-site residue. Asp136 contributes to the Mg(2+) binding site. Over 151–160 (VRLGTHPDWL) the chain is Lumenal. Residues 161–179 (FFCSFVGMFMFYCAHWQTY) traverse the membrane as a helical segment. Residues 180–190 (VSGVLRFGRVD) are Cytoplasmic-facing. A helical membrane pass occupies residues 191 to 207 (VTEIQVALVIVFMLSTF). Over 208 to 222 (GGATMWDYTIPILEI) the chain is Lumenal. Residues 223-248 (KLKIVPVLGVVGGLIFSCSNYFHVIL) traverse the membrane as a helical segment. At 249–265 (HGGVGKNGSTIAGTSVL) the chain is on the cytoplasmic side. The helical transmembrane segment at 266–281 (SPGLHIGLIIILAIMI) threads the bilayer. The Lumenal segment spans residues 282-293 (YKKSATNMFEKH). Residues 294–316 (PCLYTLMFGCVFAKVAQKLVIAH) traverse the membrane as a helical segment. Residues 317–329 (MTKSELYLQDTVF) lie on the Cytoplasmic side of the membrane. A helical membrane pass occupies residues 330 to 339 (IGPGLLFLDQ). The Lumenal segment spans residues 340–346 (YFNNFID). A helical transmembrane segment spans residues 347–376 (EYVVLWIAMVISSFDMMIYFTSLCLQISRH). The Cytoplasmic segment spans residues 377–398 (LHLNIFKTSCQQAPEQVYKHID).

Belongs to the CDP-alcohol phosphatidyltransferase class-I family. Mg(2+) serves as cofactor. The cofactor is Mn(2+). Expressed in brain, heart, lung, liver, spleen, intestine and muscle. Down-regulated in kidney of type 2 diabetic KK/Ta mice.

The protein localises to the golgi apparatus membrane. The enzyme catalyses CDP-choline + a 1,2-diacyl-sn-glycerol = a 1,2-diacyl-sn-glycero-3-phosphocholine + CMP + H(+). It carries out the reaction 1-octadecanoyl-2-(5Z,8Z,11Z,14Z-eicosatetraenoyl)-sn-glycerol + CDP-choline = 1-octadecanoyl-2-(5Z,8Z,11Z,14Z-eicosatetraenoyl)-sn-glycero-3-phosphocholine + CMP + H(+). The catalysed reaction is 1-hexadecanoyl-2-(9Z-octadecenoyl)-sn-glycerol + CDP-choline = 1-hexadecanoyl-2-(9Z-octadecenoyl)-sn-glycero-3-phosphocholine + CMP + H(+). It catalyses the reaction 1-hexadecanoyl-2-(4Z,7Z,10Z,13Z,16Z,19Z-docosahexaenoyl)-sn-glycerol + CDP-choline = 1-hexadecanoyl-2-(4Z,7Z,10Z,13Z,16Z,19Z-docosahexaenoyl)-sn-glycero-3-phosphocholine + CMP + H(+). The enzyme catalyses 1,2-dioctanoyl-sn-glycerol + CDP-choline = 1,2-dioctanoyl-sn-glycero-3-phosphocholine + CMP + H(+). Its pathway is phospholipid metabolism; phosphatidylcholine biosynthesis; phosphatidylcholine from phosphocholine: step 2/2. Its function is as follows. Catalyzes the final step of de novo phosphatidylcholine (PC) synthesis, i.e. the transfer of choline phosphate from CDP-choline to the free hydroxyl of a diacylglycerol (DAG), producing a PC. It thereby plays a central role in the formation and maintenance of vesicular membranes. The protein is Cholinephosphotransferase 1 of Mus musculus (Mouse).